The chain runs to 490 residues: Aspartyl/glutamyl-tRNA(Asn/Gln) amidotransferase subunit B (490 aa).

The protein belongs to the GatB/GatE family. GatB subfamily. In terms of assembly, heterotrimer of A, B and C subunits.

The enzyme catalyses L-glutamyl-tRNA(Gln) + L-glutamine + ATP + H2O = L-glutaminyl-tRNA(Gln) + L-glutamate + ADP + phosphate + H(+). It carries out the reaction L-aspartyl-tRNA(Asn) + L-glutamine + ATP + H2O = L-asparaginyl-tRNA(Asn) + L-glutamate + ADP + phosphate + 2 H(+). Functionally, allows the formation of correctly charged Asn-tRNA(Asn) or Gln-tRNA(Gln) through the transamidation of misacylated Asp-tRNA(Asn) or Glu-tRNA(Gln) in organisms which lack either or both of asparaginyl-tRNA or glutaminyl-tRNA synthetases. The reaction takes place in the presence of glutamine and ATP through an activated phospho-Asp-tRNA(Asn) or phospho-Glu-tRNA(Gln). The protein is Aspartyl/glutamyl-tRNA(Asn/Gln) amidotransferase subunit B of Methylorubrum populi (strain ATCC BAA-705 / NCIMB 13946 / BJ001) (Methylobacterium populi).